Here is a 328-residue protein sequence, read N- to C-terminus: Ribosomal protein L11 methyltransferase (328 aa).

4 residues coordinate S-adenosyl-L-methionine: Thr-158, Gly-180, Asp-202, and Asn-246.

Belongs to the methyltransferase superfamily. PrmA family.

The protein localises to the cytoplasm. It carries out the reaction L-lysyl-[protein] + 3 S-adenosyl-L-methionine = N(6),N(6),N(6)-trimethyl-L-lysyl-[protein] + 3 S-adenosyl-L-homocysteine + 3 H(+). In terms of biological role, methylates ribosomal protein L11. This Polynucleobacter necessarius subsp. necessarius (strain STIR1) protein is Ribosomal protein L11 methyltransferase.